A 179-amino-acid chain; its full sequence is Large ribosomal subunit protein uL5 (179 aa).

The protein belongs to the universal ribosomal protein uL5 family. In terms of assembly, part of the 50S ribosomal subunit; part of the 5S rRNA/L5/L18/L25 subcomplex. Contacts the 5S rRNA and the P site tRNA. Forms a bridge to the 30S subunit in the 70S ribosome.

Functionally, this is one of the proteins that bind and probably mediate the attachment of the 5S RNA into the large ribosomal subunit, where it forms part of the central protuberance. In the 70S ribosome it contacts protein S13 of the 30S subunit (bridge B1b), connecting the 2 subunits; this bridge is implicated in subunit movement. Contacts the P site tRNA; the 5S rRNA and some of its associated proteins might help stabilize positioning of ribosome-bound tRNAs. In Anaplasma marginale (strain Florida), this protein is Large ribosomal subunit protein uL5.